The primary structure comprises 525 residues: MPSNNLIKNALISVSDKKNIVEVAEKLIINKINLFSTGGTAQILKKNNIPVTEISDYTKFPEIMDGRVKTLHPKIMGGILGQKQKDQEIMKLYNICPIDIVIVNFYPFEKIKNIKKNDIDNVVNNIDIGGPTLVRASAKNYKNVIVIVDLDDFQSTIDSINNNTMNIEKRFNLASKAFEYTSYYEQIISQYFIEQNSLYKKTNNSLFPNEINFSFIKKQDLRYGENYHQKSSFYIEKNMCDSGTISTACQIQGKTLSYNNISDSDIALECVKQFTKPACVIVKHGNPCSVAVSHNILESYLSAYNSDPISAFGGIISFNCKLDEKTAQTIINQQFVEVIIIPEISKKAVKILQKKQNIRVLVTGKLQNNTVGLDLKKITNGLLVQEYDSHNIDYNSWSFVTKRSPTKKELKDSIFCWQVAKFVKSNAIVYGSDEITIGIGAGQMSRIYSTKLANIKVKDQGKNIIGATMASDAFFPFRDGIDEAASVGISSIIQPGGSIRDEEIIRAADEHNITMIFTKKRHFKH.

The 148-residue stretch at 1–148 folds into the MGS-like domain; that stretch reads MPSNNLIKNA…KNYKNVIVIV (148 aa).

This sequence belongs to the PurH family.

It carries out the reaction (6R)-10-formyltetrahydrofolate + 5-amino-1-(5-phospho-beta-D-ribosyl)imidazole-4-carboxamide = 5-formamido-1-(5-phospho-D-ribosyl)imidazole-4-carboxamide + (6S)-5,6,7,8-tetrahydrofolate. It catalyses the reaction IMP + H2O = 5-formamido-1-(5-phospho-D-ribosyl)imidazole-4-carboxamide. It participates in purine metabolism; IMP biosynthesis via de novo pathway; 5-formamido-1-(5-phospho-D-ribosyl)imidazole-4-carboxamide from 5-amino-1-(5-phospho-D-ribosyl)imidazole-4-carboxamide (10-formyl THF route): step 1/1. Its pathway is purine metabolism; IMP biosynthesis via de novo pathway; IMP from 5-formamido-1-(5-phospho-D-ribosyl)imidazole-4-carboxamide: step 1/1. This is Bifunctional purine biosynthesis protein PurH from Buchnera aphidicola subsp. Acyrthosiphon pisum (strain 5A).